The chain runs to 123 residues: Amoebiasin-2 (123 aa).

A signal peptide spans 1–16 (MKQFIFFALLCTSTYA). A BC loop motif is present at residues 45–50 (NPSTGY). The DE loop signature appears at 71–81 (EPHPSGMVGFP). The FG loop signature appears at 105-114 (PWEKGKEPLR).

It belongs to the protease inhibitor I42 family. Monomer. May form homodimer. Interacts with cysteine protease CP2. Interacts with cysteine protease CP5.

The protein resides in the cytoplasmic vesicle. It is found in the lysosome. The protein localises to the phagosome. Cysteine protease inhibitor. Inhibits cysteine proteases CP1, CP2 and to a lesser extent CP5. The sequence is that of Amoebiasin-2 from Entamoeba histolytica (strain ATCC 30459 / HM-1:IMSS / ABRM).